Here is a 281-residue protein sequence, read N- to C-terminus: Survival motor neuron protein 1 (281 aa).

2 disordered regions span residues 1-20 and 42-77; these read MANGAEDVVFCRGTGQSDDS and ALKGEDGATPQENDNPGKKRKNNKKNKSRKRCNAAP. Phosphothreonine is present on threonine 14. A phosphoserine mark is found at serine 17 and serine 20. Residues 59 to 73 show a composition bias toward basic residues; the sequence is KKRKNNKKNKSRKRC. Residues 80 to 140 form the Tudor domain; the sequence is EWQVGDSCYA…LTEPPDMDED (61 aa). Positions 145–159 are enriched in basic and acidic residues; the sequence is ANVKETESSTEESDR. The interval 145 to 242 is disordered; it reads ANVKETESST…PMSPDFGEDD (98 aa). 2 stretches are compositionally biased toward pro residues: residues 179-197 and 212-235; these read MGPPSWFPSFPPGPPPPPP and PSFPGWPPMIPLGPPMIPPPPPMS. Residues 225–252 are P2 (binding site for SNRPB); the sequence is PPMIPPPPPMSPDFGEDDEALGSMLISW. A required for interaction with SYNCRIP region spans residues 264–279; it reads GLRQGRKEAAASKKSH.

It belongs to the SMN family. In terms of assembly, homodimer. Component of an import snRNP complex composed of kpnb1, rnut1, smn1 and znf259. Part of the core SMN complex that contains smn1, gemin2/sip1, ddx20/gemin3, gemin4, gemin5, gemin6, gemin7, gemin8 and strap/unrip. Interacts with ddx20, fbl, nola1, rnut1, syncrip and with several spliceosomal snRNP core Sm proteins, including snrpb, snrpd1, snrpd2, snrpd3, snrpe and ilf3. Interacts with elavl4.

The protein resides in the nucleus. The protein localises to the gem. It localises to the cajal body. Its subcellular location is the cytoplasm. It is found in the cytoplasmic granule. The protein resides in the perikaryon. The protein localises to the cell projection. It localises to the neuron projection. Its subcellular location is the myofibril. It is found in the sarcomere. The protein resides in the z line. In terms of biological role, the SMN complex plays an essential role in spliceosomal snRNP assembly in the cytoplasm and is required for pre-mRNA splicing in the nucleus. It may also play a role in the metabolism of snoRNPs. Required in motor neurons and proprioceptive neurons to ensure correct U12 intron splicing and proper levels of tmem41b mRNA. Required for the maturation of motor neuron axonal branches and dendrites. The protein is Survival motor neuron protein 1 (smn1) of Danio rerio (Zebrafish).